Here is a 322-residue protein sequence, read N- to C-terminus: NADH-quinone oxidoreductase subunit H (322 aa).

The next 8 helical transmembrane spans lie at 12–32, 79–99, 111–131, 151–171, 183–203, 234–254, 262–282, and 301–321; these read IGKA…MSFI, IFIL…AVVP, VGLL…LFAG, LSYE…TGSF, LWNV…GVAV, FFVG…TLFF, LPPF…FILL, and VCLP…LMNV.

Belongs to the complex I subunit 1 family. As to quaternary structure, NDH-1 is composed of 13 different subunits. Subunits NuoA, H, J, K, L, M, N constitute the membrane sector of the complex.

It localises to the cell inner membrane. It catalyses the reaction a quinone + NADH + 5 H(+)(in) = a quinol + NAD(+) + 4 H(+)(out). In terms of biological role, NDH-1 shuttles electrons from NADH, via FMN and iron-sulfur (Fe-S) centers, to quinones in the respiratory chain. The immediate electron acceptor for the enzyme in this species is believed to be ubiquinone. Couples the redox reaction to proton translocation (for every two electrons transferred, four hydrogen ions are translocated across the cytoplasmic membrane), and thus conserves the redox energy in a proton gradient. This subunit may bind ubiquinone. This is NADH-quinone oxidoreductase subunit H from Shewanella oneidensis (strain ATCC 700550 / JCM 31522 / CIP 106686 / LMG 19005 / NCIMB 14063 / MR-1).